The primary structure comprises 148 residues: Small ribosomal subunit protein uS13 (148 aa).

It belongs to the universal ribosomal protein uS13 family. As to quaternary structure, part of the 30S ribosomal subunit. Forms a loose heterodimer with protein S19. Forms two bridges to the 50S subunit in the 70S ribosome.

Functionally, located at the top of the head of the 30S subunit, it contacts several helices of the 16S rRNA. In the 70S ribosome it contacts the 23S rRNA (bridge B1a) and protein L5 of the 50S subunit (bridge B1b), connecting the 2 subunits; these bridges are implicated in subunit movement. This Pyrococcus horikoshii (strain ATCC 700860 / DSM 12428 / JCM 9974 / NBRC 100139 / OT-3) protein is Small ribosomal subunit protein uS13.